A 186-amino-acid polypeptide reads, in one-letter code: Oligoribonuclease (186 aa).

The 164-residue stretch at 12–175 folds into the Exonuclease domain; sequence LIWIDLEMTG…DDIKDSIKEL (164 aa). Tyrosine 133 is an active-site residue.

It belongs to the oligoribonuclease family.

It is found in the cytoplasm. In terms of biological role, 3'-to-5' exoribonuclease specific for small oligoribonucleotides. The protein is Oligoribonuclease of Wigglesworthia glossinidia brevipalpis.